Consider the following 185-residue polypeptide: Monooxygenase hypC (185 aa).

A run of 3 helical transmembrane segments spans residues 35–55, 75–95, and 106–126; these read TGTF…PVIL, GHIQ…YAAY, and PFAV…VFMA. A glycan (N-linked (GlcNAc...) asparagine) is linked at asparagine 129. The chain crosses the membrane as a helical span at residues 165-185; it reads ALFPLSGAVLGLLSTCKIVSF.

It belongs to the anthrone oxygenase family.

It is found in the membrane. The protein operates within mycotoxin biosynthesis. In terms of biological role, monooxygenase; part of the fragmented gene cluster that mediates the biosynthesis of dothistromin (DOTH), a polyketide toxin very similar in structure to the aflatoxin precursor, versicolorin B. The first step of the pathway is the conversion of acetate to norsolorinic acid (NOR) and requires the fatty acid synthase subunits hexA and hexB, as well as the polyketide synthase pksA. PksA combines a hexanoyl starter unit and 7 malonyl-CoA extender units to synthesize the precursor NOR. The hexanoyl starter unit is provided to the acyl-carrier protein (ACP) domain by the fungal fatty acid synthase hexA/hexB. The second step is the conversion of NOR to averantin (AVN) and requires the norsolorinic acid ketoreductase nor1, which catalyzes the dehydration of norsolorinic acid to form (1'S)-averantin. The cytochrome P450 monooxygenase avnA then catalyzes the hydroxylation of AVN to 5'hydroxyaverantin (HAVN). The next step is performed by adhA that transforms HAVN to averufin (AVF). Averufin might then be converted to hydroxyversicolorone by cypX and avfA. Hydroxyversicolorone is further converted versiconal hemiacetal acetate (VHA) by moxY. VHA is then the substrate for the versiconal hemiacetal acetate esterase est1 to yield versiconal (VAL). Versicolorin B synthase vbsA then converts VAL to versicolorin B (VERB) by closing the bisfuran ring. Then, the activity of the versicolorin B desaturase verB leads to versicolorin A (VERA). DotB, a predicted chloroperoxidase, may perform epoxidation of the A-ring of VERA. Alternatively, a cytochrome P450, such as cypX or avnA could catalyze this step. It is also possible that another, uncharacterized, cytochrome P450 enzyme is responsible for this step. Opening of the epoxide could potentially be achieved by the epoxide hydrolase epoA. However, epoA seems not to be required for DOTH biosynthesis, but other epoxide hydrolases may have the ability to complement this hydrolysis. Alternatively, opening of the epoxide ring could be achieved non-enzymatically. The next step is the deoxygenation of ring A to yield the 5,8-dihydroxyanthraquinone which is most likely catalyzed by the NADPH dehydrogenase encoded by ver1. The last stages of DOTH biosynthesis are proposed to involve hydroxylation of the bisfuran. OrdB and norB might have oxidative roles here. An alternative possibility is that cytochrome P450 monoogenases such as avnA and cypX might perform these steps in addition to previously proposed steps. This chain is Monooxygenase hypC, found in Dothistroma septosporum (strain NZE10 / CBS 128990) (Red band needle blight fungus).